Here is a 154-residue protein sequence, read N- to C-terminus: Peptide deformylase (154 aa).

Cysteine 90 and histidine 132 together coordinate Fe cation. Glutamate 133 is a catalytic residue. Histidine 136 serves as a coordination point for Fe cation.

Belongs to the polypeptide deformylase family. Requires Fe(2+) as cofactor.

The catalysed reaction is N-terminal N-formyl-L-methionyl-[peptide] + H2O = N-terminal L-methionyl-[peptide] + formate. Functionally, removes the formyl group from the N-terminal Met of newly synthesized proteins. Requires at least a dipeptide for an efficient rate of reaction. N-terminal L-methionine is a prerequisite for activity but the enzyme has broad specificity at other positions. The sequence is that of Peptide deformylase from Halothermothrix orenii (strain H 168 / OCM 544 / DSM 9562).